Here is an 89-residue protein sequence, read N- to C-terminus: MAHKKAGGSSRNGRDSESKRLGVKKFGGEAVLAGNIIIRQRGTKWHPGANVGMGKDHTLFALQAGAVSFAKKANGRTYVSVNPILEAAE.

The tract at residues 1–21 (MAHKKAGGSSRNGRDSESKRL) is disordered.

It belongs to the bacterial ribosomal protein bL27 family.

This Chelativorans sp. (strain BNC1) protein is Large ribosomal subunit protein bL27.